Reading from the N-terminus, the 273-residue chain is MAVVNTSIPGLSGENPHYIPGYTGHCPLLRFSMGQTYGQVTGQLLRGPPGLAWPPAHRTLLPPIQSPRSPVISKGRLPPRRGHERLSSSIIPGYTGFIPRAQFIFAKNCNQVWAEAMSEFTRRHGEQESHQLPDGAKGEREVEEDQLREAEEPPLKQELAHASPYSMDDTDPHKFFMSGFTGYVPRARFLFGSSFPVLTNQALQEFGQMCSRGRAHKDPKPLSPLPRPTFQNLGLLPHYGGYVPGYKFQFGGTFGHLTHDALGLSITQKQLPA.

Disordered regions lie at residues 59–85 (TLLP…GHER) and 123–164 (RHGE…HASP). Basic and acidic residues predominate over residues 123-159 (RHGEQESHQLPDGAKGEREVEEDQLREAEEPPLKQEL).

This sequence belongs to the CIMIP2 family. As to quaternary structure, microtubule inner protein component of sperm flagellar doublet microtubules. Expressed in airway epithelial cells.

Its subcellular location is the cytoplasm. The protein localises to the cytoskeleton. It localises to the cilium axoneme. It is found in the flagellum axoneme. Functionally, microtubule inner protein (MIP) part of the dynein-decorated doublet microtubules (DMTs) in cilia axoneme, which is required for motile cilia beating. The chain is Ciliary microtubule inner protein 2B (Cimip2b) from Mus musculus (Mouse).